The sequence spans 906 residues: Inactive angiotensin-converting enzyme-related protein (906 aa).

The first 19 residues, 1-19 (MKFHILLLLLVGACLPVFT), serve as a signal peptide directing secretion. Residues 28 to 95 (LLPADEAPKD…SPTPEPEPAI (68 aa)) form a disordered region. Residues 67-83 (PEPKPEPEPEPEPKPEP) are compositionally biased toward basic and acidic residues. N159 is a glycosylation site (N-linked (GlcNAc...) asparagine). A Peptidase M2 domain is found at 175–765 (IKDEEKLRSW…EIDQVVVGWD (591 aa)). C289 and C297 are oxidised to a cystine. The N-linked (GlcNAc...) asparagine glycan is linked to N653. The interval 862 to 882 (VTTPEPSAEPEPTAKTTTKMP) is disordered. Over residues 863–882 (TTPEPSAEPEPTAKTTTKMP) the composition is skewed to low complexity.

Belongs to the peptidase M2 family. In terms of tissue distribution, expressed in the hypodermis, in the vulva during organogenesis, and in the ray papillae of the male tail.

Its function is as follows. Inactive as a metallopeptidase, due to a lack of active site residues. Required for larval molting, male tail development, and formation of adult alae. Acts in the heterochronic pathway and plays a role in the developmental timing of postembryonic hypodermal seam cell division and adult alae production. Acts synergistically with apl-1 in let-7 regulated postembryonic cell division events. Might act downstream of the heterochronic protein lin-41. Negative regulator of lifespan, heat and oxidative stress response and age-related degenerative changes like reduced pharyngeal pumping and decreased body movements. Lifespan restriction is dependent on the forkhead-type transcription factor daf-16. This chain is Inactive angiotensin-converting enzyme-related protein, found in Caenorhabditis elegans.